Consider the following 197-residue polypeptide: dTTP/UTP pyrophosphatase (197 aa).

Residue D70 is the Proton acceptor of the active site.

The protein belongs to the Maf family. YhdE subfamily. The cofactor is a divalent metal cation.

Its subcellular location is the cytoplasm. The enzyme catalyses dTTP + H2O = dTMP + diphosphate + H(+). It carries out the reaction UTP + H2O = UMP + diphosphate + H(+). Nucleoside triphosphate pyrophosphatase that hydrolyzes dTTP and UTP. May have a dual role in cell division arrest and in preventing the incorporation of modified nucleotides into cellular nucleic acids. In Pectobacterium atrosepticum (strain SCRI 1043 / ATCC BAA-672) (Erwinia carotovora subsp. atroseptica), this protein is dTTP/UTP pyrophosphatase.